Here is a 336-residue protein sequence, read N- to C-terminus: Plant-specific TFIIB-related protein 2 (336 aa).

The segment at Glu-2 to Glu-34 adopts a TFIIB-type zinc-finger fold. Cys-6, Cys-9, Cys-26, and Cys-29 together coordinate Zn(2+).

Specifically expressed in reproductive organs and seeds.

The protein localises to the nucleus. Plant-specific TFIIB-related protein involved in the regulation of endosperm proliferation during the syncytial phase of endosperm development. Does not contribute to RNA polymerase IV or V activities in reproductive tissues. This is Plant-specific TFIIB-related protein 2 from Arabidopsis thaliana (Mouse-ear cress).